Consider the following 376-residue polypeptide: Erythronate-4-phosphate dehydrogenase (376 aa).

2 residues coordinate substrate: serine 45 and threonine 67. Aspartate 147 serves as a coordination point for NAD(+). Arginine 209 is an active-site residue. Aspartate 233 lines the NAD(+) pocket. Residue glutamate 238 is part of the active site. Histidine 255 acts as the Proton donor in catalysis. Position 258 (glycine 258) interacts with NAD(+). Tyrosine 259 serves as a coordination point for substrate.

It belongs to the D-isomer specific 2-hydroxyacid dehydrogenase family. PdxB subfamily. Homodimer.

The protein resides in the cytoplasm. The catalysed reaction is 4-phospho-D-erythronate + NAD(+) = (R)-3-hydroxy-2-oxo-4-phosphooxybutanoate + NADH + H(+). The protein operates within cofactor biosynthesis; pyridoxine 5'-phosphate biosynthesis; pyridoxine 5'-phosphate from D-erythrose 4-phosphate: step 2/5. In terms of biological role, catalyzes the oxidation of erythronate-4-phosphate to 3-hydroxy-2-oxo-4-phosphonooxybutanoate. In Shewanella loihica (strain ATCC BAA-1088 / PV-4), this protein is Erythronate-4-phosphate dehydrogenase.